A 377-amino-acid polypeptide reads, in one-letter code: Succinyl-diaminopimelate desuccinylase (377 aa).

H66 is a Zn(2+) binding site. D68 is a catalytic residue. Residue D99 coordinates Zn(2+). Catalysis depends on E133, which acts as the Proton acceptor. Zn(2+)-binding residues include E134, E162, and H348.

The protein belongs to the peptidase M20A family. DapE subfamily. Homodimer. The cofactor is Zn(2+). It depends on Co(2+) as a cofactor.

It carries out the reaction N-succinyl-(2S,6S)-2,6-diaminopimelate + H2O = (2S,6S)-2,6-diaminopimelate + succinate. It participates in amino-acid biosynthesis; L-lysine biosynthesis via DAP pathway; LL-2,6-diaminopimelate from (S)-tetrahydrodipicolinate (succinylase route): step 3/3. Its function is as follows. Catalyzes the hydrolysis of N-succinyl-L,L-diaminopimelic acid (SDAP), forming succinate and LL-2,6-diaminopimelate (DAP), an intermediate involved in the bacterial biosynthesis of lysine and meso-diaminopimelic acid, an essential component of bacterial cell walls. In Bordetella avium (strain 197N), this protein is Succinyl-diaminopimelate desuccinylase.